The sequence spans 739 residues: Malate synthase G (739 aa).

Positions 1-18 (MTEQELLSAQTADNAGTD) are enriched in polar residues. The interval 1-23 (MTEQELLSAQTADNAGTDSTERV) is disordered. Residues V135, 142-143 (RF), S292, and R329 each bind acetyl-CoA. The active-site Proton acceptor is the R356. Glyoxylate is bound by residues R356, E447, and 472-475 (GFLD). Residues E447 and D475 each coordinate Mg(2+). An acetyl-CoA-binding site is contributed by P556. C633 carries the post-translational modification Cysteine sulfenic acid (-SOH). Catalysis depends on D647, which acts as the Proton donor.

Belongs to the malate synthase family. GlcB subfamily. Monomer. Mg(2+) serves as cofactor.

Its subcellular location is the cytoplasm. It carries out the reaction glyoxylate + acetyl-CoA + H2O = (S)-malate + CoA + H(+). It participates in carbohydrate metabolism; glyoxylate cycle; (S)-malate from isocitrate: step 2/2. Inhibited by oxalate, glycolate and ATP. Its function is as follows. Involved in the glycolate utilization. Catalyzes the condensation and subsequent hydrolysis of acetyl-coenzyme A (acetyl-CoA) and glyoxylate to form malate and CoA. This is Malate synthase G from Corynebacterium glutamicum (strain ATCC 13032 / DSM 20300 / JCM 1318 / BCRC 11384 / CCUG 27702 / LMG 3730 / NBRC 12168 / NCIMB 10025 / NRRL B-2784 / 534).